Here is a 448-residue protein sequence, read N- to C-terminus: Inositol polyphosphate 5-phosphatase K (448 aa).

Residues 16-318 (IHVVTWNVAS…SDHKPVSGTF (303 aa)) form a catalytic region. The segment at 318 to 448 (FDLELKPLVS…DPLGEAQPQI (131 aa)) is required for interaction with GPR78 and PAK1. Residues 321–448 (ELKPLVSAPL…DPLGEAQPQI (128 aa)) form a required for ruffle localization region.

This sequence belongs to the inositol 1,4,5-trisphosphate 5-phosphatase type II family. As to quaternary structure, interacts with GPR78; necessary for INPP5K localization at the endoplasmic reticulum. Interacts with PAK1; competes with GPR78. Ubiquitously expressed with highest levels in skeletal muscle, heart and kidney.

The protein resides in the endoplasmic reticulum. It is found in the cytoplasm. It carries out the reaction 1D-myo-inositol 1,4,5-trisphosphate + H2O = 1D-myo-inositol 1,4-bisphosphate + phosphate. The catalysed reaction is 1D-myo-inositol 1,3,4,5-tetrakisphosphate + H2O = 1D-myo-inositol 1,3,4-trisphosphate + phosphate. The enzyme catalyses a 1,2-diacyl-sn-glycero-3-phospho-(1D-myo-inositol-4,5-bisphosphate) + H2O = a 1,2-diacyl-sn-glycero-3-phospho-(1D-myo-inositol 4-phosphate) + phosphate. It catalyses the reaction a 1,2-diacyl-sn-glycero-3-phospho-(1D-myo-inositol-3,4,5-trisphosphate) + H2O = a 1,2-diacyl-sn-glycero-3-phospho-(1D-myo-inositol-3,4-bisphosphate) + phosphate. It carries out the reaction 1,2-dioctanoyl-sn-glycero-3-phospho-(1D-myo-inositol-3,4,5-trisphosphate) + H2O = 1,2-dioctanoyl-sn-glycero-3-phospho-(1D-myo-inositol-3,4-bisphosphate) + phosphate. Its function is as follows. Inositol 5-phosphatase which acts on inositol 1,4,5-trisphosphate, inositol 1,3,4,5-tetrakisphosphate, phosphatidylinositol 4,5-bisphosphate and phosphatidylinositol 3,4,5-trisphosphate. Has 6-fold higher affinity for phosphatidylinositol 4,5-bisphosphate than for inositol 1,4,5-trisphosphate. Negatively regulates assembly of the actin cytoskeleton. Controls insulin-dependent glucose uptake among inositol 3,4,5-trisphosphate phosphatases; therefore, is the specific regulator for insulin signaling in skeletal muscle. This is Inositol polyphosphate 5-phosphatase K from Homo sapiens (Human).